The sequence spans 329 residues: Probable alpha-1,2-galactosyltransferase gmh1 (329 aa).

The Cytoplasmic segment spans residues 1-14 (MLSFFTKNTLTKRK). The chain crosses the membrane as a helical; Signal-anchor for type II membrane protein span at residues 15–35 (LIMLALAIVFTFFAFGLYFIP). Over 36 to 329 (HDEISVFDFK…LWTKYKDKII (294 aa)) the chain is Lumenal. N127 and N169 each carry an N-linked (GlcNAc...) asparagine glycan.

The protein belongs to the glycosyltransferase 34 family.

Its subcellular location is the golgi apparatus membrane. This Schizosaccharomyces pombe (strain 972 / ATCC 24843) (Fission yeast) protein is Probable alpha-1,2-galactosyltransferase gmh1 (gmh1).